Reading from the N-terminus, the 156-residue chain is Small ribosomal subunit protein uS7 (156 aa).

It belongs to the universal ribosomal protein uS7 family. In terms of assembly, part of the 30S ribosomal subunit. Contacts proteins S9 and S11.

Functionally, one of the primary rRNA binding proteins, it binds directly to 16S rRNA where it nucleates assembly of the head domain of the 30S subunit. Is located at the subunit interface close to the decoding center, probably blocks exit of the E-site tRNA. This chain is Small ribosomal subunit protein uS7, found in Clostridium kluyveri (strain NBRC 12016).